The sequence spans 208 residues: uncharacterized protein (208 aa).

The segment at 124 to 208 (KKTGSSNART…PSFGKYSSLA (85 aa)) is disordered. A compositionally biased stretch (basic and acidic residues) spans 133–170 (TPDEGKKAKNAPEEEKVKTSGSEDAKGEESAVEGKEPE).

Its subcellular location is the golgi apparatus. This is an uncharacterized protein from Encephalitozoon cuniculi (strain GB-M1) (Microsporidian parasite).